A 359-amino-acid chain; its full sequence is tRNA-specific 2-thiouridylase MnmA (359 aa).

ATP contacts are provided by residues 10 to 17 and L36; that span reads GISGGVDS. Residue C101 is the Nucleophile of the active site. Residues C101 and C197 are joined by a disulfide bond. ATP is bound at residue G125. Positions 147–149 are interaction with tRNA; sequence KDQ. Residue C197 is the Cysteine persulfide intermediate of the active site. An interaction with tRNA region spans residues 306 to 307; it reads RY.

The protein belongs to the MnmA/TRMU family.

The protein localises to the cytoplasm. The enzyme catalyses S-sulfanyl-L-cysteinyl-[protein] + uridine(34) in tRNA + AH2 + ATP = 2-thiouridine(34) in tRNA + L-cysteinyl-[protein] + A + AMP + diphosphate + H(+). In terms of biological role, catalyzes the 2-thiolation of uridine at the wobble position (U34) of tRNA, leading to the formation of s(2)U34. The protein is tRNA-specific 2-thiouridylase MnmA of Chlorobium chlorochromatii (strain CaD3).